Here is a 480-residue protein sequence, read N- to C-terminus: Glycogen synthase (480 aa).

Lysine 15 is a binding site for ADP-alpha-D-glucose.

Belongs to the glycosyltransferase 1 family. Bacterial/plant glycogen synthase subfamily.

The catalysed reaction is [(1-&gt;4)-alpha-D-glucosyl](n) + ADP-alpha-D-glucose = [(1-&gt;4)-alpha-D-glucosyl](n+1) + ADP + H(+). The protein operates within glycan biosynthesis; glycogen biosynthesis. Synthesizes alpha-1,4-glucan chains using ADP-glucose. The polypeptide is Glycogen synthase (Pasteurella multocida (strain Pm70)).